Reading from the N-terminus, the 1480-residue chain is Cystic fibrosis transmembrane conductance regulator (1480 aa).

The Cytoplasmic portion of the chain corresponds to 1 to 77 (MQRSPLEKAS…KLINALRRCF (77 aa)). The helical transmembrane segment at 78–98 (FWRFMFYGIFLYLGEVTKAVQ) threads the bilayer. The ABC transmembrane type-1 1 domain maps to 81-365 (FMFYGIFLYL…WAVQTWYDSL (285 aa)). Over 99–122 (PLLLGRIIASYDPDNKEERSIAIY) the chain is Extracellular. The helical transmembrane segment at 123-146 (LGIGLCLLFIVRTLLLHPAIFGLH) threads the bilayer. Over 147-195 (HIGMQMRIAMFSLIYKKTLKLSSRVLDKISIGQLVSLLSNNLNKFDEGL) the chain is Cytoplasmic. The helical transmembrane segment at 196 to 216 (ALAHFVWIAPLQVALLMGLIW) threads the bilayer. The Extracellular portion of the chain corresponds to 217–222 (ELLQAS). The helical transmembrane segment at 223–243 (AFCGLGFLIVLALFQAGLGRM) threads the bilayer. The Cytoplasmic segment spans residues 244–298 (MMKYRDQRAGKISERLVITSEMIENIQSVKAYCWEEAMEKMIENLRQTELKLTRK). Residues 299-319 (AAYVRYFNSSAFFFSGFFVVF) form a helical membrane-spanning segment. Residues 320-339 (LSVLPYALIKGIILRKIFTT) are Extracellular-facing. A helical transmembrane segment spans residues 340-358 (ISFCIVLRMAVTRQFPWAV). Residues 359-858 (QTWYDSLGAI…YLRYITVHKS (500 aa)) are Cytoplasmic-facing. ATP-binding positions include W401, S434, 458-465 (GSTGAGKT), and Q493. The 224-residue stretch at 423–646 (NGDDSLFFSN…QPDFSSKLMG (224 aa)) folds into the ABC transporter 1 domain. C524 is lipidated: S-palmitoyl cysteine. S549 is subject to Phosphoserine. The disordered R region stretch occupies residues 654-831 (SAERRNSILT…EEINEEDLKE (178 aa)). S660 and S670 each carry phosphoserine; by PKA. A Phosphoserine; by PKC modification is found at S686. K688 is covalently cross-linked (Glycyl lysine isopeptide (Lys-Gly) (interchain with G-Cter in ubiquitin)). Phosphoserine; by PKA is present on residues S700 and S712. T717 carries the post-translational modification Phosphothreonine. A phosphoserine; by PKA mark is found at S737, S753, and S768. S790 carries the phosphoserine; by PKC modification. Phosphoserine; by PKA is present on residues S795 and S813. A helical membrane pass occupies residues 859–879 (LIFVLIWCLVIFLAEVAASLV). Residues 859-1155 (LIFVLIWCLV…AVNSSIDVDS (297 aa)) form the ABC transmembrane type-1 2 domain. Over 880-918 (VLWLLGNTPLQDKGNSTHSRNNSYAVIITSTSSYYVFYI) the chain is Extracellular. N894 and N900 each carry an N-linked (GlcNAc...) asparagine glycan. The discontinuously helical transmembrane segment at 919 to 939 (YVGVADTLLAMGFFRGLPLVH) threads the bilayer. The Cytoplasmic portion of the chain corresponds to 940-990 (TLITVSKILHHKMLHSVLQAPMSTLNTLKAGGILNRFSKDIAILDDLLPLT). A helical membrane pass occupies residues 991–1011 (IFDFIQLLLIVIGAIAVVAVL). Topologically, residues 1012–1013 (QP) are extracellular. The chain crosses the membrane as a helical span at residues 1014-1034 (YIFVATVPVIVAFIMLRAYFL). The Cytoplasmic segment spans residues 1035–1095 (QTSQQLKQLE…TANWFLYLST (61 aa)). A helical transmembrane segment spans residues 1096–1116 (LRWFQMRIEMIFVIFFIAVTF). Residues 1117–1130 (ISILTTGEGEGRVG) lie on the Extracellular side of the membrane. The chain crosses the membrane as a helical span at residues 1131 to 1151 (IILTLAMNIMSTLQWAVNSSI). The Cytoplasmic segment spans residues 1152–1480 (DVDSLMRSVS…TEEEVQDTRL (329 aa)). The ABC transporter 2 domain maps to 1210–1443 (MTVKDLTAKY…RSLFRQAISP (234 aa)). Residues Y1219 and 1244–1251 (GRTGSGKS) each bind ATP. The interaction with GORASP2 stretch occupies residues 1386–1480 (RTLKQAFADC…TEEEVQDTRL (95 aa)). C1395 is lipidated: S-palmitoyl cysteine. A phosphoserine mark is found at S1444 and S1456. A disordered region spans residues 1452 to 1480 (HRNSSKCKSKPQIAALKEETEEEVQDTRL). Over residues 1470–1480 (ETEEEVQDTRL) the composition is skewed to acidic residues. Residues 1478–1480 (TRL) carry the PDZ-binding motif.

Belongs to the ABC transporter superfamily. ABCC family. CFTR transporter (TC 3.A.1.202) subfamily. As to quaternary structure, monomer; does not require oligomerization for channel activity. May form oligomers in the membrane. Interacts with SLC26A3, SLC26A6 and SHANK2. Interacts with NHERF1 and MYO6. Interacts (via C-terminus) with GOPC (via PDZ domain); this promotes CFTR internalization and thereby decreases channel activity. Interacts with SLC4A7 through NHERF1. Found in a complex with MYO5B and RAB11A. Interacts with ANO1. Interacts with SLC26A8. Interacts with AHCYL1; the interaction increases CFTR activity. Interacts with CSE1L. The core-glycosylated form interacts with GORASP2 (via PDZ GRASP-type 1 domain) in respone to ER stress. Interacts with MARCHF2; the interaction leads to CFTR ubiqtuitination and degradation. Interacts with ADGRG2. In terms of processing, N-glycosylated. Post-translationally, phosphorylated; cAMP treatment promotes phosphorylation and activates the channel. Dephosphorylation decreases the ATPase activity (in vitro). Phosphorylation at PKA sites activates the channel. Phosphorylation at PKC sites enhances the response to phosphorylation by PKA. Phosphorylated by AMPK; this inhibits channel activity. Ubiquitinated, leading to its degradation in the lysosome. Deubiquitination by USP10 in early endosomes enhances its endocytic recycling to the cell membrane. Ubiquitinated by RNF185 during ER stress. Ubiquitinated by MARCHF2. As to expression, expressed in the respiratory airway, including bronchial epithelium, and in the female reproductive tract, including oviduct (at protein level). Detected in pancreatic intercalated ducts in the exocrine tissue, on epithelial cells in intralobular striated ducts in sublingual salivary glands, on apical membranes of crypt cells throughout the small and large intestine, and on the reabsorptive duct in eccrine sweat glands. Detected on the equatorial segment of the sperm head (at protein level). Detected in nasal and bronchial superficial epithelium. Expressed by the central cells on the sebaceous glands, dermal adipocytes and, at lower levels, by epithelial cells.

It is found in the apical cell membrane. The protein localises to the early endosome membrane. The protein resides in the cell membrane. Its subcellular location is the recycling endosome membrane. It localises to the endoplasmic reticulum membrane. It is found in the nucleus. It catalyses the reaction ATP + H2O + closed Cl(-) channel = ADP + phosphate + open Cl(-) channel.. The enzyme catalyses chloride(in) = chloride(out). It carries out the reaction hydrogencarbonate(in) = hydrogencarbonate(out). The catalysed reaction is ATP + H2O = ADP + phosphate + H(+). In terms of biological role, epithelial ion channel that plays an important role in the regulation of epithelial ion and water transport and fluid homeostasis. Mediates the transport of chloride ions across the cell membrane. Possesses an intrinsic ATPase activity and utilizes ATP to gate its channel; the passive flow of anions through the channel is gated by cycles of ATP binding and hydrolysis by the ATP-binding domains. The ion channel is also permeable to HCO(3)(-); selectivity depends on the extracellular chloride concentration. In vitro, mediates ATP-dependent glutathione flux. Exerts its function also by modulating the activity of other ion channels and transporters. Plays an important role in airway fluid homeostasis. Contributes to the regulation of the pH and the ion content of the airway surface fluid layer and thereby plays an important role in defense against pathogens. Modulates the activity of the epithelial sodium channel (ENaC) complex, in part by regulating the cell surface expression of the ENaC complex. Inhibits the activity of the ENaC channel containing subunits SCNN1A, SCNN1B and SCNN1G. Inhibits the activity of the ENaC channel containing subunits SCNN1D, SCNN1B and SCNN1G, but not of the ENaC channel containing subunits SCNN1A, SCNN1B and SCNN1G. May regulate bicarbonate secretion and salvage in epithelial cells by regulating the transporter SLC4A7. Can inhibit the chloride channel activity of ANO1. Plays a role in the chloride and bicarbonate homeostasis during sperm epididymal maturation and capacitation. The chain is Cystic fibrosis transmembrane conductance regulator from Homo sapiens (Human).